The primary structure comprises 337 residues: Cytoskeleton protein RodZ (337 aa).

The Cytoplasmic portion of the chain corresponds to 1-111 (MNTEATHDQN…LGKRRKKRDG (111 aa)). The region spanning 19–71 (LRNAREQLGLSQQAVAERLCLKVSTVRDIEEDKAPADLASTFLRGYIRSYARL) is the HTH cro/C1-type domain. Positions 30 to 49 (QQAVAERLCLKVSTVRDIEE) form a DNA-binding region, H-T-H motif. A helical; Signal-anchor for type II membrane protein transmembrane segment spans residues 112–132 (WLMTFTWLVLFVVIGLSGAWW). Residues 133 to 337 (WQDHKAQQEE…TLNAEQSPAQ (205 aa)) lie on the Periplasmic side of the membrane. Residues 145 to 167 (TMADQSSAELSSNSEQGQSVPLN) show a composition bias toward polar residues. The segment at 145–218 (TMADQSSAEL…AVVSPSQANV (74 aa)) is disordered. Residues 168–207 (TSTTTDPATTSTPPASVDTTATNTQTPAVTAPAPAVDPQQ) show a composition bias toward low complexity. Over residues 208–218 (NAVVSPSQANV) the composition is skewed to polar residues.

It belongs to the RodZ family.

The protein localises to the cell inner membrane. In terms of biological role, cytoskeletal protein that is involved in cell-shape control through regulation of the length of the long axis. The protein is Cytoskeleton protein RodZ of Shigella dysenteriae serotype 1 (strain Sd197).